A 309-amino-acid polypeptide reads, in one-letter code: Ribonuclease Z (309 aa).

Zn(2+) contacts are provided by H63, H65, D67, H68, H145, D216, and H274. The active-site Proton acceptor is the D67.

It belongs to the RNase Z family. As to quaternary structure, homodimer. Zn(2+) is required as a cofactor.

It catalyses the reaction Endonucleolytic cleavage of RNA, removing extra 3' nucleotides from tRNA precursor, generating 3' termini of tRNAs. A 3'-hydroxy group is left at the tRNA terminus and a 5'-phosphoryl group is left at the trailer molecule.. In terms of biological role, zinc phosphodiesterase, which displays some tRNA 3'-processing endonuclease activity. Probably involved in tRNA maturation, by removing a 3'-trailer from precursor tRNA. The chain is Ribonuclease Z from Streptococcus uberis (strain ATCC BAA-854 / 0140J).